Here is a 162-residue protein sequence, read N- to C-terminus: Protein NrdI (162 aa).

The protein belongs to the NrdI family.

Its function is as follows. Probably involved in ribonucleotide reductase function. This Streptococcus pyogenes serotype M2 (strain MGAS10270) protein is Protein NrdI.